The following is a 309-amino-acid chain: MSNASKFGKVAVLFGGKSAERDVSLDSGQAVLDALLRSGVQAEAFDPKERSVTELVGYDRAFIVLHGRGGEDGQIQGVLEWLDIPYTGTGVQGSAIGMDKIKTKQIWQGSDLPTAPYRIVSKDSDLNEIVASLGLPVIIKPVHEGSSIGMSKVEKIEDFAPAIEKATAHDAIVMAEKWITGREYTIVVLNGKALPVIRLQPPQDVAFYDYDAKYQRNDVQYGIPSGLSDSDEKKLQELTLRAFHTVGASGWGRVDAMQDEHGNFWLLEINTVPGMTSHSLVPKAAQAIGIDFDALCVEILAQTLTGLAH.

An ATP-grasp domain is found at 104–301 (KQIWQGSDLP…FDALCVEILA (198 aa)). 130-185 (VASLGLPVIIKPVHEGSSIGMSKVEKIEDFAPAIEKATAHDAIVMAEKWITGREYT) contributes to the ATP binding site. The Mg(2+) site is built by Asp255, Glu268, and Asn270.

It belongs to the D-alanine--D-alanine ligase family. Mg(2+) is required as a cofactor. Mn(2+) serves as cofactor.

Its subcellular location is the cytoplasm. The enzyme catalyses 2 D-alanine + ATP = D-alanyl-D-alanine + ADP + phosphate + H(+). It functions in the pathway cell wall biogenesis; peptidoglycan biosynthesis. Its function is as follows. Cell wall formation. In Acinetobacter baylyi (strain ATCC 33305 / BD413 / ADP1), this protein is D-alanine--D-alanine ligase.